We begin with the raw amino-acid sequence, 89 residues long: Small ribosomal subunit protein uS15 (89 aa).

The protein belongs to the universal ribosomal protein uS15 family. As to quaternary structure, part of the 30S ribosomal subunit. Forms a bridge to the 50S subunit in the 70S ribosome, contacting the 23S rRNA.

Functionally, one of the primary rRNA binding proteins, it binds directly to 16S rRNA where it helps nucleate assembly of the platform of the 30S subunit by binding and bridging several RNA helices of the 16S rRNA. In terms of biological role, forms an intersubunit bridge (bridge B4) with the 23S rRNA of the 50S subunit in the ribosome. The sequence is that of Small ribosomal subunit protein uS15 from Alcanivorax borkumensis (strain ATCC 700651 / DSM 11573 / NCIMB 13689 / SK2).